Reading from the N-terminus, the 360-residue chain is Casein kinase II subunit alpha (360 aa).

A Protein kinase domain is found at 38 to 323 (YQLVRKLGRG…AQEAMGHEYF (286 aa)). ATP is bound by residues 44–52 (LGRGKYSEV) and K67. The Proton acceptor role is filled by D155. A disordered region spans residues 334-360 (NGTEQADGQGASNSASSQSSDAKIDGA). Residues 338-354 (QADGQGASNSASSQSSD) show a composition bias toward low complexity.

It belongs to the protein kinase superfamily. Ser/Thr protein kinase family. CK2 subfamily. As to quaternary structure, tetramer of two alpha and two beta chains. In terms of tissue distribution, expressed in a subset of the adult male sensory neurons: CEM head neurons, ray RnB neurons, and hook HOB tail neurons.

Its subcellular location is the cell projection. The protein resides in the axon. It is found in the cilium. It localises to the dendrite. The protein localises to the perikaryon. The enzyme catalyses L-seryl-[protein] + ATP = O-phospho-L-seryl-[protein] + ADP + H(+). The catalysed reaction is L-threonyl-[protein] + ATP = O-phospho-L-threonyl-[protein] + ADP + H(+). In terms of biological role, casein kinases are operationally defined by their preferential utilization of acidic proteins such as caseins as substrates. The alpha chain contains the catalytic site. May participate in Wnt signaling. Modulates two aspects of male mating behavior; response to hermaphrodite contact and vulval location, acting in the same pathway as lov-1 and pkd-2. In Caenorhabditis elegans, this protein is Casein kinase II subunit alpha (kin-3).